Here is a 197-residue protein sequence, read N- to C-terminus: Imidazoleglycerol-phosphate dehydratase (197 aa).

It belongs to the imidazoleglycerol-phosphate dehydratase family.

The protein resides in the cytoplasm. It carries out the reaction D-erythro-1-(imidazol-4-yl)glycerol 3-phosphate = 3-(imidazol-4-yl)-2-oxopropyl phosphate + H2O. The protein operates within amino-acid biosynthesis; L-histidine biosynthesis; L-histidine from 5-phospho-alpha-D-ribose 1-diphosphate: step 6/9. This Syntrophobacter fumaroxidans (strain DSM 10017 / MPOB) protein is Imidazoleglycerol-phosphate dehydratase.